The primary structure comprises 296 residues: Urease operon transcriptional activator (296 aa).

Residues 171–268 enclose the HTH araC/xylS-type domain; it reads QAITHLITQE…NMTPSQFRLQ (98 aa). 2 consecutive DNA-binding regions (H-T-H motif) follow at residues 188–209 and 235–258; these read DDVA…NREG and VFQI…KRKY.

Its function is as follows. Positive regulator of the expression of the urease operon. The sequence is that of Urease operon transcriptional activator (ureR) from Escherichia coli.